The chain runs to 236 residues: CD81 protein (236 aa).

At 1–12 (MGVEGCTKCIKY) the chain is on the cytoplasmic side. The chain crosses the membrane as a helical span at residues 13–33 (LLFVFNFVFWLAGGVILGVAL). Residues 34–63 (WLRHDPQTTNLLYLELGDKPAPNTFYVGIY) lie on the Extracellular side of the membrane. Residues 64 to 84 (ILIAVGAVMMFVGFLGCYGAI) traverse the membrane as a helical segment. The Cytoplasmic portion of the chain corresponds to 85–89 (QESQC). The chain crosses the membrane as a helical span at residues 90-112 (LLGTFFTCLVILFACEVAAGIWG). Residues 113-201 (FVNKDQIAKD…QKIDELFSGK (89 aa)) are Extracellular-facing. 2 cysteine pairs are disulfide-bonded: C156–C190 and C157–C175. Residues 202 to 224 (LYLIGIAAIVVAVIMIFEMILSM) traverse the membrane as a helical segment. E219 contacts cholesterol. Residues 225 to 236 (VLCCGIRNSSVY) are Cytoplasmic-facing.

Belongs to the tetraspanin (TM4SF) family. In terms of assembly, homodimer. Part of a complex composed of CD19, CR2/CD21, CD81 and IFITM1/CD225 in the membrane of mature B cells. Interacts (via the second extracellular domain) with CD19; this interaction is initiated early during biosynthesis in the ER and enables trafficking of only properly folded CD19. Part of a complex that includes MHC class II/HLA-DR molecules and IFITM1. Interacts with IFITM1. Interacts with IFITM2 and IFITM3. Part of integrin-tetraspanin complex composed of CD9, CD81, beta-1 and beta-2 integrins in the membrane of monocyte/macrophages. Interacts (via the second extracellular domain) with integrin ITGAV:ITGB3. Interacts with CD247/CD3 zeta, ICAM1 and CD9 at the immune synapse on T cell membrane. Part of a GPCR-tetraspanin complex consisting at least of ADGRG1, CD81, possibly CD9, and GNA11 in which CD81 enhances the association of ADGRG1 with GNA11. Part of a complex composed of CD9, CD81, PTGFRN and IGSF8. Interacts directly with IGSF8. Interacts with CD53 and SCIMP. Interacts with SAMHD1 (via its C-terminus). Interacts with glypican GPC3 and with the transcriptional repressor HHEX; binding to GPC3 decreases the availability of free CD81 for binding to HHEX, resulting in nuclear translocation of HHEX and transcriptional repression. Interacts with CLDN1. Interacts with CLDN6 and CLDN9. Not glycosylated. Post-translationally, likely constitutively palmitoylated at low levels. Protein palmitoylation is up-regulated upon coligation of BCR and CD9-C2R-CD81 complexes in lipid rafts.

Its subcellular location is the cell membrane. The protein localises to the basolateral cell membrane. Structural component of specialized membrane microdomains known as tetraspanin-enriched microdomains (TERMs), which act as platforms for receptor clustering and signaling. Essential for trafficking and compartmentalization of CD19 receptor on the surface of activated B cells. Upon initial encounter with microbial pathogens, enables the assembly of CD19-CR2/CD21 and B cell receptor (BCR) complexes at signaling TERMs, lowering the threshold dose of antigen required to trigger B cell clonal expansion and antibody production. In T cells, facilitates the localization of CD247/CD3 zeta at antigen-induced synapses with B cells, providing for costimulation and polarization toward T helper type 2 phenotype. Present in MHC class II compartments, may also play a role in antigen presentation. Can act both as positive and negative regulator of homotypic or heterotypic cell-cell fusion processes. Positively regulates sperm-egg fusion and may be involved in acrosome reaction. In myoblasts, associates with CD9 and PTGFRN and inhibits myotube fusion during muscle regeneration. In macrophages, associates with CD9 and beta-1 and beta-2 integrins, and prevents macrophage fusion into multinucleated giant cells specialized in ingesting complement-opsonized large particles. Also prevents the fusion of mononuclear cell progenitors into osteoclasts in charge of bone resorption. May regulate the compartmentalization of enzymatic activities. In T cells, defines the subcellular localization of dNTPase SAMHD1 and permits its degradation by the proteasome, thereby controlling intracellular dNTP levels. Also involved in cell adhesion and motility. Positively regulates integrin-mediated adhesion of macrophages, particularly relevant for the inflammatory response in the lung. The protein is CD81 protein (CD81) of Saguinus oedipus (Cotton-top tamarin).